Reading from the N-terminus, the 267-residue chain is Corrinoid adenosyltransferase EutT (267 aa).

A divalent metal cation-binding residues include C80 and C83.

This sequence belongs to the Cob(I)alamin adenosyltransferase family. EutT subfamily. Homodimer. It depends on a divalent metal cation as a cofactor.

The protein resides in the bacterial microcompartment. It catalyses the reaction 2 cob(II)alamin + reduced [electron-transfer flavoprotein] + 2 ATP + 2 H2O = 2 adenosylcob(III)alamin + oxidized [electron-transfer flavoprotein] + 2 phosphate + 2 diphosphate + 3 H(+). The catalysed reaction is 2 cob(II)inamide + reduced [electron-transfer flavoprotein] + 2 ATP + 2 H2O = 2 adenosylcob(III)inamide + oxidized [electron-transfer flavoprotein] + 2 phosphate + 2 diphosphate + 3 H(+). The protein operates within amine and polyamine degradation; ethanolamine degradation. In terms of biological role, converts cyanocobalamin (CN-B12) to adenosylcobalamin (AdoCbl), the inducer of the eut operon. Is not active on cobinamide nor other intermediates in the adenosylcobalamin synthetic pathway. Allows full induction of the eut operon. Can use ADP, CTP and dATP in place of ATP, and cobinamide in place of cobalamin, none are as efficiently used as ATP and cobalamin. Its function is as follows. Expression of the eut operon allows this bacteria to use ethanolamine (EA) as a carbon, nitrogen and energy source. It relies on cobalamin (vitamin B12) both as a cofactor for the ethanolamine ammonia-lyase (EAL) activity and to induce the operon. EA enhances bacterial survival in macrophages in a concentration-dependent manner, suggesting it is an important nutrient during infection. This Salmonella typhimurium (strain LT2 / SGSC1412 / ATCC 700720) protein is Corrinoid adenosyltransferase EutT.